Consider the following 87-residue polypeptide: uncharacterized protein (87 aa).

A signal peptide spans 1–26; it reads MMSTQHFILSLTILIIISNLHDEVNA. 3 cysteine pairs are disulfide-bonded: Cys-61–Cys-75, Cys-68–Cys-79, and Cys-74–Cys-84.

It is found in the secreted. This is an uncharacterized protein from Schistosoma japonicum (Blood fluke).